Consider the following 233-residue polypeptide: MEKTMSNSTSTPAAHRLGLVGRKVGMTRIFTEEGESIPVTVLDVSNNRVTQIKSLEADGYAAVQVAYGTRRASRVAQPQTGHYAKAGTEAGSILKEFRLDPARLAEFTPGAVIAVESVFEAGQQVDVTGTTIGKGFAGTIKRHHFGSQRASHGNSRSHRVPGSIGQAQDPGRIFPGKRMSGHLGDVTRTVQNLDVVRVDAERGLLLVKGAVPGHAGGDVVVRPAIKAPAKKGA.

The segment at 145–172 is disordered; the sequence is FGSQRASHGNSRSHRVPGSIGQAQDPGR. Residue Gln168 is modified to N5-methylglutamine.

Belongs to the universal ribosomal protein uL3 family. As to quaternary structure, part of the 50S ribosomal subunit. Forms a cluster with proteins L14 and L19. In terms of processing, methylated by PrmB.

One of the primary rRNA binding proteins, it binds directly near the 3'-end of the 23S rRNA, where it nucleates assembly of the 50S subunit. The polypeptide is Large ribosomal subunit protein uL3 (Bordetella petrii (strain ATCC BAA-461 / DSM 12804 / CCUG 43448)).